The sequence spans 77 residues: Acyl carrier protein (77 aa).

The region spanning 2–77 is the Carrier domain; the sequence is SDIADRVKKI…DAVKFIQGAV (76 aa). At Ser-37 the chain carries O-(pantetheine 4'-phosphoryl)serine.

It belongs to the acyl carrier protein (ACP) family. 4'-phosphopantetheine is transferred from CoA to a specific serine of apo-ACP by AcpS. This modification is essential for activity because fatty acids are bound in thioester linkage to the sulfhydryl of the prosthetic group.

Its subcellular location is the cytoplasm. Its pathway is lipid metabolism; fatty acid biosynthesis. In terms of biological role, carrier of the growing fatty acid chain in fatty acid biosynthesis. The sequence is that of Acyl carrier protein from Paracoccus denitrificans (strain Pd 1222).